Reading from the N-terminus, the 520-residue chain is 2-methylcitrate dehydratase, mitochondrial (520 aa).

The N-terminal 37 residues, 1–37 (MRAFRSAANFGAASNIYRKSFTPASIASNRFVSARMS), are a transit peptide targeting the mitochondrion.

This sequence belongs to the PrpD family. Monomer.

It localises to the mitochondrion. It catalyses the reaction (2S,3S)-2-methylcitrate = 2-methyl-cis-aconitate + H2O. Its pathway is organic acid metabolism; propanoate degradation. With respect to regulation, several bivalent metal ions, such as nickel, copper, zinc, mercury, and lead, inhibit the activity to some extent. Inhibited by structural analogs such as citrate, cis-aconitate, isocitrate, 2-methylisocitrate, tricarballylate and fluorocitrate, but not by trans-aconitate or adipate. Functionally, component of the methylcitrate cycle that catalyzes the dehydration of 2-methylcitrate to 2-methyl-cis-aconitate. The methylcitrate cycle is a metabolic pathway for the consumption of propionic acid. The polypeptide is 2-methylcitrate dehydratase, mitochondrial (Yarrowia lipolytica (strain CLIB 122 / E 150) (Yeast)).